Reading from the N-terminus, the 443-residue chain is MSHASRPTPLEARGSTPLTGRVRVPGDKSISHRALILGALAVGETKITGLLEGEDVLNTAKAMAALGAKVERVGEGAWRVHGVGVGGFRAPDAPLDFGNSGTGCRLAMGAVAGSPIAATFDGDASLRSRPMRRILDPLELMGAKVSGGDGARLPLTLEGARDPIPMVYRTPVASAQIKSAVLLAGLSAPGETTVIEAEASRDHTERMLAQFGADIVTEPEGTHGRRITLTGQPELHGADVVVPADPSSAAFPIVAALIVPGSDLTLTDVMTNPLRTGLFTTLREMGASIEESDVRDAGEPMANLRVRASKLRGVTVPPERAPAMIDEYLVLAVAAAFAEGTTRMLGLKELRVKESDRLEATADMLRVNGVKVEIVGDDLIVHGEGRVPGGGTVATHMDHRIAMSALVMGCASDTPVKVDDTAFIATSFPDFIPMMRGLGADFV.

A disordered region spans residues 1–22 (MSHASRPTPLEARGSTPLTGRV). Positions 28, 29, and 33 each coordinate 3-phosphoshikimate. A phosphoenolpyruvate-binding site is contributed by Lys-28. Residues Gly-101 and Arg-129 each contribute to the phosphoenolpyruvate site. Ser-174, Gln-176, Asp-326, and Lys-353 together coordinate 3-phosphoshikimate. Gln-176 contacts phosphoenolpyruvate. Residue Asp-326 is the Proton acceptor of the active site. Phosphoenolpyruvate is bound by residues Arg-357 and Arg-400.

Belongs to the EPSP synthase family. In terms of assembly, monomer.

Its subcellular location is the cytoplasm. It catalyses the reaction 3-phosphoshikimate + phosphoenolpyruvate = 5-O-(1-carboxyvinyl)-3-phosphoshikimate + phosphate. Its pathway is metabolic intermediate biosynthesis; chorismate biosynthesis; chorismate from D-erythrose 4-phosphate and phosphoenolpyruvate: step 6/7. In terms of biological role, catalyzes the transfer of the enolpyruvyl moiety of phosphoenolpyruvate (PEP) to the 5-hydroxyl of shikimate-3-phosphate (S3P) to produce enolpyruvyl shikimate-3-phosphate and inorganic phosphate. The polypeptide is 3-phosphoshikimate 1-carboxyvinyltransferase (Afipia carboxidovorans (strain ATCC 49405 / DSM 1227 / KCTC 32145 / OM5) (Oligotropha carboxidovorans)).